The chain runs to 284 residues: uncharacterized protein (284 aa).

The signal sequence occupies residues 1 to 24 (MLYSRESRTTVLFLALVTSLTVLC). The Cytoplasmic segment spans residues 25–84 (HSVDVTTVFTTSTITEITTVTAAPQPQNKAETALNTATNIIQTMQFLFNCAPFKWKGPLK). The chain crosses the membrane as a helical span at residues 85–104 (ITSCALNFIVLLLTAWGYLL). Topologically, residues 105-284 (KYLQENKLNS…SVHMYSSSLL (180 aa)) are extracellular. Residue Asn270 is glycosylated (N-linked (GlcNAc...) asparagine).

The protein to yeast YNL019c.

The protein localises to the cell membrane. This is an uncharacterized protein from Saccharomyces cerevisiae (strain ATCC 204508 / S288c) (Baker's yeast).